The following is an 82-amino-acid chain: uncharacterized protein (82 aa).

It localises to the plastid. The protein resides in the chloroplast. This is an uncharacterized protein from Vicia faba (Broad bean).